A 493-amino-acid chain; its full sequence is C2H2-type transcription factor ffmA (493 aa).

A compositionally biased stretch (low complexity) spans 1–18 (MPMPQYTMQPQYPVSQPH). 3 disordered regions span residues 1–50 (MPMP…SRYP), 68–140 (TTVG…YPDG), and 164–202 (EPPRTQVVGSQGRRGILPSVPGRVAPVTNGVNGTAKNTT). Polar residues-rich tracts occupy residues 69–79 (TVGSLPPSTFL) and 192–202 (NGVNGTAKNTT). The C2H2-type 1 zinc finger occupies 212-234 (FPCPHCNKTYLHAKHLKRHLLRH). A C2H2-type 2; degenerate zinc finger spans residues 240–265 (YMCVLCKDTFSRSDILKRHFQKCSIR). 2 stretches are compositionally biased toward polar residues: residues 288-307 (QAAANTAKSLQEEVSSTVPP) and 484-493 (ASTTLGGDGK). Disordered regions lie at residues 288–316 (QAAANTAKSLQEEVSSTVPPSNGIAGATF) and 468–493 (TTTAGPQEGGMNGLYLASTTLGGDGK).

The protein belongs to the krueppel C2H2-type zinc-finger protein family.

It localises to the nucleus. Its function is as follows. Transcription factor that acts in coordination with atrR to regulate the expression of the ABC-type multidrug transporter abcG1 and thus plays a role in azole susceptibility. Regulates the expression of genes involved in fermentation. Is able to promote expression from the yeast FLO11 promoter. This chain is C2H2-type transcription factor ffmA, found in Aspergillus fumigatus (strain CBS 144.89 / FGSC A1163 / CEA10) (Neosartorya fumigata).